Here is a 307-residue protein sequence, read N- to C-terminus: DDRGK domain-containing protein 1 (307 aa).

Over M1–D2 the chain is Lumenal. A helical membrane pass occupies residues L3–L23. Residues Q24–A307 are Cytoplasmic-facing. Residues E31 to R175 are disordered. The segment covering R52–V83 has biased composition (low complexity). Basic and acidic residues predominate over residues L107–R175.

It belongs to the DDRGK1 family. Interacts with Atg9; the interaction is transient.

It is found in the endoplasmic reticulum membrane. Substrate adapter for ufmylation, the covalent attachment of the ubiquitin-like modifier UFM1 to substrate proteins. Required for ufmylation of Atg9; protects the nervous system during aging, possibly by stabilizing Atg9 and supporting its function. The polypeptide is DDRGK domain-containing protein 1 (Drosophila virilis (Fruit fly)).